Reading from the N-terminus, the 271-residue chain is Formamidopyrimidine-DNA glycosylase (271 aa).

Catalysis depends on P2, which acts as the Schiff-base intermediate with DNA. Catalysis depends on E3, which acts as the Proton donor. K58 (proton donor; for beta-elimination activity) is an active-site residue. Residues H91, R110, and R152 each contribute to the DNA site. The FPG-type zinc-finger motif lies at 237–271 (QIYGRSAHPCPICGTPIRLERIGQRASYYCTQCQH). R261 (proton donor; for delta-elimination activity) is an active-site residue.

It belongs to the FPG family. In terms of assembly, monomer. Zn(2+) is required as a cofactor.

The enzyme catalyses Hydrolysis of DNA containing ring-opened 7-methylguanine residues, releasing 2,6-diamino-4-hydroxy-5-(N-methyl)formamidopyrimidine.. The catalysed reaction is 2'-deoxyribonucleotide-(2'-deoxyribose 5'-phosphate)-2'-deoxyribonucleotide-DNA = a 3'-end 2'-deoxyribonucleotide-(2,3-dehydro-2,3-deoxyribose 5'-phosphate)-DNA + a 5'-end 5'-phospho-2'-deoxyribonucleoside-DNA + H(+). Its function is as follows. Involved in base excision repair of DNA damaged by oxidation or by mutagenic agents. Acts as a DNA glycosylase that recognizes and removes damaged bases. Has a preference for oxidized purines, such as 7,8-dihydro-8-oxoguanine (8-oxoG). Has AP (apurinic/apyrimidinic) lyase activity and introduces nicks in the DNA strand. Cleaves the DNA backbone by beta-delta elimination to generate a single-strand break at the site of the removed base with both 3'- and 5'-phosphates. The sequence is that of Formamidopyrimidine-DNA glycosylase from Nitrosococcus oceani (strain ATCC 19707 / BCRC 17464 / JCM 30415 / NCIMB 11848 / C-107).